A 734-amino-acid chain; its full sequence is NAD(P)H-quinone oxidoreductase subunit 5, chloroplastic (734 aa).

12 helical membrane passes run 9-29, 40-60, 89-109, 121-140, 144-166, 185-205, 219-239, 258-278, 289-311, 318-338, 395-415, and 425-445; these read WIIPLLPLVSSITIGLGLFFF, YAIISTLLLSIAMFISFDLLW, IDPLTSIMLVLVTTIGVTVMI, YVRFFAYLSLSTASMLGLVI, LIQIYIFRELVGMCSYLLIGFWF, GDFGLLLGTSGFYWITGSFKF, HEVSLFLATPCALLFPLGPVA, TPISAPIHAATMVAAGIFLVA, LVMSSISWVGGVTASLGATVALA, VLAYSTMSQLGYMMLALGIGS, GTTFLLGTLSLCGIPPLACFW, and WLYFPILGWIARFTAGLTGFY. Positions 512–534 are disordered; it reads DKNVKNSVSTQSSREEYSPHPKE. Over residues 524 to 534 the composition is skewed to basic and acidic residues; the sequence is SREEYSPHPKE. The next 3 helical transmembrane spans lie at 539–559, 601–621, and 707–727; these read MLFPLLILTIPTLLVGFIGVP, VGTASLGIFTASILYGPIPFF, and ISYYLFGFISGTIILLLVVIN.

Belongs to the complex I subunit 5 family. In terms of assembly, NDH is composed of at least 16 different subunits, 5 of which are encoded in the nucleus.

It localises to the plastid. It is found in the chloroplast thylakoid membrane. The catalysed reaction is a plastoquinone + NADH + (n+1) H(+)(in) = a plastoquinol + NAD(+) + n H(+)(out). It catalyses the reaction a plastoquinone + NADPH + (n+1) H(+)(in) = a plastoquinol + NADP(+) + n H(+)(out). NDH shuttles electrons from NAD(P)H:plastoquinone, via FMN and iron-sulfur (Fe-S) centers, to quinones in the photosynthetic chain and possibly in a chloroplast respiratory chain. The immediate electron acceptor for the enzyme in this species is believed to be plastoquinone. Couples the redox reaction to proton translocation, and thus conserves the redox energy in a proton gradient. This Huperzia lucidula (Shining clubmoss) protein is NAD(P)H-quinone oxidoreductase subunit 5, chloroplastic (ndhF).